Here is a 186-residue protein sequence, read N- to C-terminus: MSLPLHPSLNNGITKGSANFSGGKLRCKCSSSPVEVTLAGNVAHNHACGCSKCWKPEGAIFSVIGVIPKEQVSVTANADKLYIVDESAAIQRHACSGCGVHLYGRIEKEHPFKGLDFVHTELSSEKGWQEPQFAAFVSSIIEQGFDPSKMDAVRAQFKSIGLETYDALNPPLMDAIASWTAQKAKI.

A CENP-V/GFA domain is found at 20–166 (FSGGKLRCKC…FKSIGLETYD (147 aa)). Zn(2+) contacts are provided by Cys27, Cys29, Cys48, Cys50, Cys53, Cys95, and Cys98.

Belongs to the Gfa family. Zn(2+) is required as a cofactor.

The catalysed reaction is S-(hydroxymethyl)glutathione = glutathione + formaldehyde. It functions in the pathway one-carbon metabolism; formaldehyde degradation; formate from formaldehyde (glutathione route): step 1/3. Functionally, catalyzes the condensation of formaldehyde and glutathione to S-hydroxymethylglutathione. In Fusarium vanettenii (strain ATCC MYA-4622 / CBS 123669 / FGSC 9596 / NRRL 45880 / 77-13-4) (Fusarium solani subsp. pisi), this protein is Putative glutathione-dependent formaldehyde-activating enzyme.